The following is a 437-amino-acid chain: Magnetosome protein MamN (437 aa).

The next 11 membrane-spanning stretches (helical) occupy residues 26-46 (LAVL…GTYT), 53-73 (SIYF…ALLA), 95-115 (WILV…NSLI), 136-156 (VPVI…TMIG), 174-194 (FIGG…LFFE), 229-249 (YGLI…PLKV), 252-268 (GWIA…LGRF), 281-301 (DILF…VGIL), 320-340 (AILL…GTSA), 358-378 (AAWW…LSGA), and 416-436 (WGLP…AVLA).

The protein belongs to the arsenite-antimonite (ArsB) efflux (TC 2.A.45) family.

It is found in the magnetosome membrane. In terms of biological role, plays a role in biomineralization; might regulate pH in the magnetosome. The sequence is that of Magnetosome protein MamN from Magnetospirillum gryphiswaldense (strain DSM 6361 / JCM 21280 / NBRC 15271 / MSR-1).